Reading from the N-terminus, the 428-residue chain is Histidine--tRNA ligase (428 aa).

Belongs to the class-II aminoacyl-tRNA synthetase family. As to quaternary structure, homodimer.

The protein resides in the cytoplasm. It carries out the reaction tRNA(His) + L-histidine + ATP = L-histidyl-tRNA(His) + AMP + diphosphate + H(+). The polypeptide is Histidine--tRNA ligase (Chlamydia trachomatis serovar A (strain ATCC VR-571B / DSM 19440 / HAR-13)).